Reading from the N-terminus, the 445-residue chain is Phosphoglucosamine mutase (445 aa).

Ser-102 acts as the Phosphoserine intermediate in catalysis. Mg(2+) is bound by residues Ser-102, Asp-241, Asp-243, and Asp-245. The residue at position 102 (Ser-102) is a Phosphoserine.

It belongs to the phosphohexose mutase family. Mg(2+) serves as cofactor. Activated by phosphorylation.

It catalyses the reaction alpha-D-glucosamine 1-phosphate = D-glucosamine 6-phosphate. Functionally, catalyzes the conversion of glucosamine-6-phosphate to glucosamine-1-phosphate. In Shewanella halifaxensis (strain HAW-EB4), this protein is Phosphoglucosamine mutase.